Here is a 406-residue protein sequence, read N- to C-terminus: MATPSNLGSSVLASKTKTKKKHFVAQKVKLFRASDPLLSVLMWGVNHSINELSHVQIPVMLMPDDFKAYSKIKVDNHLFNKENMPSHFKFKEYCPMVFRNLRERFGIDDQDFQNSLTRSAPLPNDSQARSGARFHTSYDKRYVIKTITSEDVAEMHNILKKYHQYIVECHGVTLLPQFLGMYRLNVDGVEIYVIVTRNVFSHRLSVYRKYDLKGSTVAREASDKEKAKELPTLKDNDFINEGQKIYIDDSNKKIFLEKLKKDVEFLAQLKLMDYSLLVGIHDVERAEQEEVECEENEGEEEGESDGAHPIGTPPDSPGNTLNSSPPLAPGEFDPNIDVYAIKCHENAPRKEVYFMAIIDILTHYDAKKKAAHAAKTVKHGAGAEISTVNPEQYSKRFLDFIGHILT.

Ala2 carries the N-acetylalanine modification. Thr3 carries the phosphothreonine modification. At Ser14 the chain carries Phosphoserine. Residues 33-405 (ASDPLLSVLM…RFLDFIGHIL (373 aa)) enclose the PIPK domain. Residues 59–65 (VMLMPDD) are required for interaction with PIP5K1A. N6-acetyllysine is present on residues Lys89 and Lys145. A disordered region spans residues 287-328 (EQEEVECEENEGEEEGESDGAHPIGTPPDSPGNTLNSSPPLA). Acidic residues predominate over residues 289 to 304 (EEVECEENEGEEEGES).

In terms of assembly, homodimer. Interacts with PIP4K2B; the interaction may regulate localization to the nucleus. Probably interacts with PIP5K1A; the interaction inhibits PIP5K1A kinase activity. Phosphorylated in tyrosines. Phosphorylation is induced by light and increases kinase activity.

The protein localises to the cell membrane. Its subcellular location is the nucleus. It localises to the lysosome. It is found in the cytoplasm. The protein resides in the photoreceptor inner segment. The protein localises to the cell projection. Its subcellular location is the cilium. It localises to the photoreceptor outer segment. It catalyses the reaction a 1,2-diacyl-sn-glycero-3-phospho-(1D-myo-inositol-5-phosphate) + ATP = a 1,2-diacyl-sn-glycero-3-phospho-(1D-myo-inositol-4,5-bisphosphate) + ADP + H(+). It carries out the reaction 1,2-dihexadecanoyl-sn-glycero-3-phospho-(1D-myo-inositol-5-phosphate) + ATP = 1,2-dihexadecanoyl-sn-glycero-3-phospho-(1D-myo-inositol-4,5-bisphosphate) + ADP + H(+). The enzyme catalyses 1,2-dihexadecanoyl-sn-glycero-3-phospho-(1D-myo-inositol-5-phosphate) + GTP = 1,2-dihexadecanoyl-sn-glycero-3-phospho-(1D-myo-inositol-4,5-bisphosphate) + GDP + H(+). In rod outer segments, activated by light. Catalyzes the phosphorylation of phosphatidylinositol 5-phosphate (PtdIns5P) on the fourth hydroxyl of the myo-inositol ring, to form phosphatidylinositol 4,5-bisphosphate (PtdIns(4,5)P2). Has both ATP- and GTP-dependent kinase activities. May exert its function by regulating the levels of PtdIns5P, which functions in the cytosol by increasing AKT activity and in the nucleus signals through ING2. May regulate the pool of cytosolic PtdIns5P in response to the activation of tyrosine phosphorylation. Required for lysosome-peroxisome membrane contacts and intracellular cholesterol transport through modulating peroxisomal PtdIns(4,5)P2 level. In collaboration with PIP4K2B, has a role in mediating autophagy in times of nutrient stress. Required for autophagosome-lysosome fusion and the regulation of cellular lipid metabolism. Negatively regulates insulin signaling through a catalytic-independent mechanism. PIP4Ks interact with PIP5Ks and suppress PIP5K-mediated PtdIns(4,5)P2 synthesis and insulin-dependent conversion to PtdIns(3,4,5)P3. May be involved in thrombopoiesis, and the terminal maturation of megakaryocytes and regulation of their size. In Rattus norvegicus (Rat), this protein is Phosphatidylinositol 5-phosphate 4-kinase type-2 alpha.